We begin with the raw amino-acid sequence, 1721 residues long: Intersectin-1 (1721 aa).

The EH 1 domain maps to 21–109; that stretch reads ERAKHDQQFH…PVMKQQPVAI (89 aa). Residues 53–88 form the EF-hand 1 domain; the sequence is LPQPVLAQIWALADMNNDGRMDQVEFSIAMKLIKLK. 5 residues coordinate Ca(2+): Asp-66, Asn-68, Asp-70, Arg-72, and Glu-77. A Phosphoserine modification is found at Ser-203. The EH 2 domain occupies 221–310; it reads SRLKYRQLFN…PEYIPPSFRR (90 aa). The EF-hand 2 domain maps to 254 to 289; it reads LPQAQLASIWNLSDIDQDGKLTAEEFILAMHLIDVA. Residues Asp-267, Asp-269, Asp-271, Lys-273, and Glu-278 each contribute to the Ca(2+) site. Ser-318 bears the Phosphoserine mark. Disordered stretches follow at residues 322–348 and 650–701; these read STSV…KLPV and QRRA…KQEA. Residues 326 to 702 are KLERQ; the sequence is DQRLPEEPVL…GEEKGKQEAQ (377 aa). A coiled-coil region spans residues 355–659; the sequence is RENFERGNLE…QRRAQERDKQ (305 aa). Phosphoserine is present on Ser-687. Residues 740–806 form the SH3 1 domain; it reads VKVVYYRALY…PANYAEKIPE (67 aa). The interval 836–868 is disordered; that stretch reads LAVTSSEPSTTPNNWADFSSTWPTSTNEKPETD. Residues 838-862 show a composition bias toward polar residues; the sequence is VTSSEPSTTPNNWADFSSTWPTSTN. Thr-897 carries the phosphothreonine modification. Residues Ser-901, Ser-902, and Ser-904 each carry the phosphoserine modification. The SH3 2 domain occupies 913-971; it reads VEGLQAQALYPWRAKKDNHLNFNKNDVITVLEQQDMWWFGEVQGQKGWFPKSYVKLISG. Residues Ser-978, Ser-986, and Ser-995 each carry the phosphoserine modification. SH3 domains follow at residues 1002–1060 and 1074–1138; these read VSGE…LKDS and KKPE…LLSP. The required for interaction with FCHSD2 stretch occupies residues 1074 to 1138; it reads KKPEIAQVIA…PANYVKLLSP (65 aa). The Bipartite nuclear localization signal; in isoform 2 motif lies at 1104–1127; sequence RKKNPGGWWEGELQARGKKRQIGW. Position 1137 is a phosphoserine (Ser-1137). A Phosphothreonine modification is found at Thr-1144. An SH3 5 domain is found at 1155 to 1214; sequence AAVCQVIGMYDYTAQNDDELAFNKGQIINVLNKEDPDWWKGEVNGQVGLFPSNYVKLTTD. In terms of domain architecture, DH spans 1237-1423; it reads KRQGYIHELI…EELCSQVNEG (187 aa). In terms of domain architecture, PH spans 1462-1571; the sequence is KFLHSGKLYK…WVQKIKAASE (110 aa). The C2 domain occupies 1579–1695; sequence KKREKAYLVR…KKDQGSKGPV (117 aa). A Phosphoserine modification is found at Ser-1645. Ca(2+)-binding residues include Asp-1667, Ser-1670, and Asp-1673.

As to quaternary structure, interacts (via DH domain) with CDC42. Interacts (via SH3 domain 1) with WASL. Interacts with dynamin, SNAP25 and SNAP23. Interacts with clathrin-associated proteins and other components of the endocytic machinery, such as SPIN90, EPS15, EPN1, EPN2, STON2, FCHO1, FCHO2 and DAB2. Interacts (via SH3 domains) with REPS1 and SGIP1. Interacts with ARHGAP31. Interacts with ADAM15. Interacts with PRRT2. Interacts (via SH3 domain 4) with FCHSD2 (via SH3 domain 2). Interacts (via SH3 domain 1) with DENND2B. Interacts (via SH3 domains) with CBL. Isoform 2: Interacts with CBL and DNM1. Isoform 2: Interacts with LMNA. Isoform 2: Interacts with importin subunit KPNA1; this is likely to mediate its import into the nucleus. Interacts with DNM2. (Microbial infection) Interacts with vaccinia virus protein A36. The cofactor is Ca(2+). Isoform 1 is expressed almost exclusively in the brain. Isoform 2 is detected in brain, spleen, lung, liver, heart, skeletal muscle and kidney. Isoform 5 is primarily expressed in brain, spleen, lung and kidney (at protein level). Isoform 1 and isoform 2 are detected in brain. Isoform 2 is ubiquitous in adult and fetal tissues with high expression in skeletal muscle, heart, spleen, ovary, testis and all fetal tissues tested and low expression in thymus, blood, lung, liver and pancreas. Isoform 1 is expressed almost exclusively in the brain, in all brain regions. Not expressed in the spinal cord.

It localises to the endomembrane system. Its subcellular location is the synapse. The protein resides in the synaptosome. The protein localises to the cell projection. It is found in the lamellipodium. It localises to the cell membrane. Its subcellular location is the membrane. The protein resides in the clathrin-coated pit. The protein localises to the recycling endosome. It is found in the endosome. It localises to the cytoplasmic vesicle. Its subcellular location is the cytoplasm. The protein resides in the nucleus envelope. Its function is as follows. Adapter protein that provides a link between the endocytic membrane traffic and the actin assembly machinery. Acts as a guanine nucleotide exchange factor (GEF) for CDC42, and thereby stimulates actin nucleation mediated by WASL and the ARP2/3 complex. Plays a role in the assembly and maturation of clathrin-coated vesicles. Recruits FCHSD2 to clathrin-coated pits. Involved in endocytosis of activated EGFR, and probably also other growth factor receptors. Involved in endocytosis of integrin beta-1 (ITGB1) and transferrin receptor (TFR); internalization of ITGB1 as DAB2-dependent cargo but not TFR may involve association with DAB2. Promotes ubiquitination and subsequent degradation of EGFR, and thereby contributes to the down-regulation of EGFR-dependent signaling pathways. In chromaffin cells, required for normal exocytosis of catecholamines. Required for rapid replenishment of release-ready synaptic vesicles at presynaptic active zones. Inhibits ARHGAP31 activity toward RAC1. Functionally, plays a role in synaptic vesicle endocytosis in brain neurons. In Homo sapiens (Human), this protein is Intersectin-1.